The primary structure comprises 278 residues: Large ribosomal subunit protein uL2 (278 aa).

The segment at 201-278 (HGNINDGKAG…IMRSRHQRKK (78 aa)) is disordered. A compositionally biased stretch (basic residues) spans 210 to 221 (GRSRWRGKRPHV).

Belongs to the universal ribosomal protein uL2 family. As to quaternary structure, part of the 50S ribosomal subunit. Forms a bridge to the 30S subunit in the 70S ribosome.

One of the primary rRNA binding proteins. Required for association of the 30S and 50S subunits to form the 70S ribosome, for tRNA binding and peptide bond formation. It has been suggested to have peptidyltransferase activity; this is somewhat controversial. Makes several contacts with the 16S rRNA in the 70S ribosome. The chain is Large ribosomal subunit protein uL2 from Agrobacterium fabrum (strain C58 / ATCC 33970) (Agrobacterium tumefaciens (strain C58)).